A 158-amino-acid chain; its full sequence is Cyclic pyranopterin monophosphate synthase (158 aa).

Residues 75-77 (LCH) and 113-114 (ME) each bind substrate. Residue aspartate 128 is part of the active site.

It belongs to the MoaC family. As to quaternary structure, homohexamer; trimer of dimers.

The enzyme catalyses (8S)-3',8-cyclo-7,8-dihydroguanosine 5'-triphosphate = cyclic pyranopterin phosphate + diphosphate. The protein operates within cofactor biosynthesis; molybdopterin biosynthesis. In terms of biological role, catalyzes the conversion of (8S)-3',8-cyclo-7,8-dihydroguanosine 5'-triphosphate to cyclic pyranopterin monophosphate (cPMP). This is Cyclic pyranopterin monophosphate synthase from Vibrio campbellii (strain ATCC BAA-1116).